The primary structure comprises 221 residues: 7-cyano-7-deazaguanine synthase (221 aa).

ATP is bound at residue 10–20 (FSGGQDSTTCL). Zn(2+) is bound by residues C187, C196, C199, and C202.

It belongs to the QueC family. In terms of assembly, homodimer. Requires Zn(2+) as cofactor.

It catalyses the reaction 7-carboxy-7-deazaguanine + NH4(+) + ATP = 7-cyano-7-deazaguanine + ADP + phosphate + H2O + H(+). It functions in the pathway purine metabolism; 7-cyano-7-deazaguanine biosynthesis. In terms of biological role, catalyzes the ATP-dependent conversion of 7-carboxy-7-deazaguanine (CDG) to 7-cyano-7-deazaguanine (preQ(0)). The chain is 7-cyano-7-deazaguanine synthase from Shouchella clausii (strain KSM-K16) (Alkalihalobacillus clausii).